A 217-amino-acid polypeptide reads, in one-letter code: MTVALALRDGCRRISTMTRQYGVTTQRHLISPVVFDITPLGRRPGAIIALQKTVPSLARIGLELVVIEWGAPINLDLRVESVSEDVLVAGTVTAPTVSECVRCLTAVHGHVQVTLNQLFAYPYSATKVTTEEDAVGHVVDGTIDLEQSIIDAVGIELPFAPMCRSDCPGLCAECGTSLVVEPGHPHDRIDPWWAKLTDMLAPDVPQTSETDGSRSEW.

To M.tuberculosis Rv2926c.

This is an uncharacterized protein from Mycobacterium leprae (strain TN).